The primary structure comprises 69 residues: Large ribosomal subunit protein uL30 (69 aa).

It belongs to the universal ribosomal protein uL30 family. Part of the 50S ribosomal subunit.

This Rhizobium etli (strain ATCC 51251 / DSM 11541 / JCM 21823 / NBRC 15573 / CFN 42) protein is Large ribosomal subunit protein uL30.